Reading from the N-terminus, the 1049-residue chain is Self-sufficient cytochrome P450 monooxygenase CYP505E4 (1049 aa).

C405 serves as a coordination point for heme. The disordered stretch occupies residues 462-492; it reads ATALSQHNMSAGATSSPGSSAHPAGNKNAQD. Over residues 471-486 the composition is skewed to low complexity; that stretch reads SAGATSSPGSSAHPAG. Residues 499 to 640 enclose the Flavodoxin-like domain; it reads ISFFYGSNSG…DLEVWEETNL (142 aa). FMN is bound by residues 505 to 509 and 584 to 616; these read SNSGT and VFGC…TRLT. In terms of domain architecture, FAD-binding FR-type spans 678-906; that stretch reads RDLIEGKVTA…RPAKEAFHLP (229 aa).

In the N-terminal section; belongs to the cytochrome P450 family. Requires FAD as cofactor. It depends on FMN as a cofactor. Heme serves as cofactor.

The enzyme catalyses 2 oxidized [cytochrome P450] + NADPH = 2 reduced [cytochrome P450] + NADP(+) + H(+). It catalyses the reaction an organic molecule + reduced [NADPH--hemoprotein reductase] + O2 = an alcohol + oxidized [NADPH--hemoprotein reductase] + H2O + H(+). It carries out the reaction dodecanoate + reduced [NADPH--hemoprotein reductase] + O2 = 5-hydroxydodecanoate + oxidized [NADPH--hemoprotein reductase] + H2O + H(+). The catalysed reaction is tetradecanoate + reduced [NADPH--hemoprotein reductase] + O2 = 7-hydroxytetradecanoate + oxidized [NADPH--hemoprotein reductase] + H2O + H(+). The enzyme catalyses dodecan-1-ol + reduced [NADPH--hemoprotein reductase] + O2 = 1,5-dodecanediol + oxidized [NADPH--hemoprotein reductase] + H2O + H(+). It catalyses the reaction dodecan-1-ol + reduced [NADPH--hemoprotein reductase] + O2 = 1,4-dodecanediol + oxidized [NADPH--hemoprotein reductase] + H2O + H(+). It carries out the reaction dodecan-1-ol + reduced [NADPH--hemoprotein reductase] + O2 = 1,6-dodecanediol + oxidized [NADPH--hemoprotein reductase] + H2O + H(+). In terms of biological role, self-sufficient cytochrome P450 monooxygenase that catalyzes the regioselective in-chain hydroxylation of alkanes, fatty alcohols, and fatty acids at the omega-7 position. Performs hydroxylation of C10-C16 n-alkanes and C12 and C14 fatty alcohols; and thereby enables the one step biocatalytic synthesis of rare alcohols such as 5-dodecanol and 7-tetradecanol. Converts 1-dodecanol into 1,5-dodecanediol as major product with very little sub-terminally hydroxylated products with the 1,4-dodecanediol and 1,6-dodecanediol more abundant. Converts dodecanoic acid to 5-hydroxydodecanoic acid which can be further converted into delta-dodecalactone by lactonization of the 5-hydroxy acid at low pH. Also gives sub-terminal hydroxylation of dodecanoic acid with 9-hydroxydodecanoic acid being the second most abundant product. This is Self-sufficient cytochrome P450 monooxygenase CYP505E4 from Penicillium freii.